The sequence spans 664 residues: RBBP8 N-terminal-like protein (664 aa).

A compositionally biased stretch (basic and acidic residues) spans 125–140 (LRGLGDRPKPRAKEGT). Disordered regions lie at residues 125–284 (LRGL…KLSP) and 369–664 (RAGS…WEET). Residues 241–255 (GTPPPLPARSSPPSP) are compositionally biased toward pro residues. The span at 437–454 (ALDKPLDLSEWGRARGQD) shows a compositional bias: basic and acidic residues. Positions 481–496 (SGPLTRSPQALSNGTK) are enriched in polar residues. Residues 516-528 (LPGSQLSLSSPGS) are compositionally biased toward low complexity. Pro residues predominate over residues 537 to 552 (PLPPPHPQPPPHPQPP). Residues 554-570 (LDGHPEPSKAEVLRPES) show a composition bias toward basic and acidic residues. A compositionally biased stretch (polar residues) spans 584 to 597 (GLSSQAEATTSTTG). Basic residues predominate over residues 628-637 (KKPSRGRRKL). A compositionally biased stretch (polar residues) spans 654–664 (PSPNSSPWEET).

This is RBBP8 N-terminal-like protein (RBBP8NL) from Homo sapiens (Human).